We begin with the raw amino-acid sequence, 278 residues long: Release factor glutamine methyltransferase (278 aa).

Residues glycine 117–glycine 121, aspartate 140, and asparagine 184 each bind S-adenosyl-L-methionine. Asparagine 184–tyrosine 187 is a substrate binding site.

It belongs to the protein N5-glutamine methyltransferase family. PrmC subfamily.

The catalysed reaction is L-glutaminyl-[peptide chain release factor] + S-adenosyl-L-methionine = N(5)-methyl-L-glutaminyl-[peptide chain release factor] + S-adenosyl-L-homocysteine + H(+). Functionally, methylates the class 1 translation termination release factors RF1/PrfA and RF2/PrfB on the glutamine residue of the universally conserved GGQ motif. This is Release factor glutamine methyltransferase from Staphylococcus aureus (strain NCTC 8325 / PS 47).